Consider the following 549-residue polypeptide: Glucose-6-phosphate isomerase (549 aa).

Glutamate 353 functions as the Proton donor in the catalytic mechanism. Residues histidine 384 and lysine 513 contribute to the active site.

It belongs to the GPI family.

The protein localises to the cytoplasm. It carries out the reaction alpha-D-glucose 6-phosphate = beta-D-fructose 6-phosphate. Its pathway is carbohydrate biosynthesis; gluconeogenesis. The protein operates within carbohydrate degradation; glycolysis; D-glyceraldehyde 3-phosphate and glycerone phosphate from D-glucose: step 2/4. Catalyzes the reversible isomerization of glucose-6-phosphate to fructose-6-phosphate. The protein is Glucose-6-phosphate isomerase of Bartonella bacilliformis (strain ATCC 35685 / KC583 / Herrer 020/F12,63).